The following is a 128-amino-acid chain: Iron-sulfur cluster insertion protein ErpA 1 (128 aa).

Iron-sulfur cluster is bound by residues Cys-47, Cys-111, and Cys-113.

It belongs to the HesB/IscA family. As to quaternary structure, homodimer. Iron-sulfur cluster serves as cofactor.

In terms of biological role, required for insertion of 4Fe-4S clusters for at least IspG. The polypeptide is Iron-sulfur cluster insertion protein ErpA 1 (Methylococcus capsulatus (strain ATCC 33009 / NCIMB 11132 / Bath)).